A 405-amino-acid chain; its full sequence is Ubiquitin-like modifier-activating enzyme 5 (405 aa).

The disordered stretch occupies residues Met-1–Glu-44. The segment covering Leu-7–Arg-24 has biased composition (basic and acidic residues). ATP-binding residues include Gly-81, Asp-102, Lys-125, Asn-148, and Asn-182. The Zn(2+) site is built by Cys-224 and Cys-227. Residue Cys-248 is the Glycyl thioester intermediate of the active site. The Zn(2+) site is built by Cys-301 and Cys-306. Residues Ala-346–Thr-377 form a linker region. The short motif at Asp-390–Ile-405 is the UFC1-binding sequence (UFC) element.

It belongs to the ubiquitin-activating E1 family. UBA5 subfamily. In terms of assembly, homodimer; homodimerization is required for UFM1 activation. Interacts (via UIS motif) with UFM1; binds UFM1 via a trans-binding mechanism in which UFM1 interacts with distinct sites in both subunits of the UBA5 homodimer. Interacts (via C-terminus) with UFC1.

It localises to the cytoplasm. Its subcellular location is the nucleus. It is found in the endoplasmic reticulum membrane. The protein localises to the golgi apparatus. E1-like enzyme which specifically catalyzes the first step in ufmylation. Activates UFM1 by first adenylating its C-terminal glycine residue with ATP, and thereafter linking this residue to the side chain of a cysteine residue in E1, yielding a UFM1-E1 thioester and free AMP. Activates UFM1 via a trans-binding mechanism, in which UFM1 interacts with distinct sites in both subunits of the UBA5 homodimer. Trans-binding also promotes stabilization of the UBA5 homodimer, and enhances ATP-binding. Transfer of UFM1 from UBA5 to the E2-like enzyme UFC1 also takes place using a trans mechanism. This is Ubiquitin-like modifier-activating enzyme 5 from Branchiostoma floridae (Florida lancelet).